The primary structure comprises 279 residues: Shikimate dehydrogenase (NADP(+)) (279 aa).

Shikimate is bound by residues 17 to 19 (SLS) and Thr-64. Lys-68 functions as the Proton acceptor in the catalytic mechanism. Residue Asp-80 coordinates NADP(+). Residues Asn-89 and Asp-105 each contribute to the shikimate site. Residues 129–133 (GAGGS), 153–158 (NRTAKK), and Leu-221 contribute to the NADP(+) site. Residue Tyr-223 participates in shikimate binding. Gly-245 contributes to the NADP(+) binding site.

This sequence belongs to the shikimate dehydrogenase family. Homodimer.

It catalyses the reaction shikimate + NADP(+) = 3-dehydroshikimate + NADPH + H(+). It participates in metabolic intermediate biosynthesis; chorismate biosynthesis; chorismate from D-erythrose 4-phosphate and phosphoenolpyruvate: step 4/7. Involved in the biosynthesis of the chorismate, which leads to the biosynthesis of aromatic amino acids. Catalyzes the reversible NADPH linked reduction of 3-dehydroshikimate (DHSA) to yield shikimate (SA). The protein is Shikimate dehydrogenase (NADP(+)) of Idiomarina loihiensis (strain ATCC BAA-735 / DSM 15497 / L2-TR).